Here is a 271-residue protein sequence, read N- to C-terminus: Transmembrane protein 150A (271 aa).

Over 1 to 2 (MT) the chain is Cytoplasmic. Residues 3–23 (AWILLPVSLSAFSITGIWTVY) form a helical membrane-spanning segment. Topologically, residues 24–75 (AMAVMNRHVCPVENWSYNESCSPDPAEQGGPKSCCTLDDVPLISKCGTYPPE) are extracellular. N-linked (GlcNAc...) asparagine glycosylation is found at Asn-37 and Asn-41. The helical transmembrane segment at 76–96 (SCLFSLIGNMGAVMVALICLL) threads the bilayer. Residues 97-108 (RYGQLLEQSRHS) are Cytoplasmic-facing. Residues 109 to 129 (WINTTALITGCTNAAGLVVVG) traverse the membrane as a helical segment. The Extracellular segment spans residues 130 to 140 (NFQVDHAKSLH). A helical transmembrane segment spans residues 141 to 161 (YIGTGVAFTAGLLFVCLHCVL). Residues 162–178 (FYHGATTPLDMAMAYLR) are Cytoplasmic-facing. Residues 179 to 199 (SVLAVIAFITLVLSGVFFLHE) form a helical membrane-spanning segment. At 200–211 (SSQLQHGAALCE) the chain is on the extracellular side. The helical transmembrane segment at 212 to 232 (WVFVLDILIFYGTFSYEFGTI) threads the bilayer. Topologically, residues 233–271 (SSDTLVAALQPAPGRACKSSGSSSTSTHLNCAPESIAMI) are cytoplasmic.

This sequence belongs to the DRAM/TMEM150 family. In terms of assembly, interacts (via C-terminal cytoplasmic tail) with PI4KA.

Its subcellular location is the cell membrane. Its function is as follows. Regulates localization of phosphatidylinositol 4-kinase (PI4K) to the plasma membrane, possibly by reducing the association of TTC7 (TTC7A or TTC7B) with the PI4K complex. Acts as a regulator of phosphatidylinositol 4-phosphate (PtdIns(4)P) synthesis. May also play a role in fasting-induced catabolism. This is Transmembrane protein 150A (Tmem150a) from Mus musculus (Mouse).